The chain runs to 108 residues: Large ribosomal subunit protein eL33A (108 aa).

Belongs to the eukaryotic ribosomal protein eL33 family. As to quaternary structure, component of the large ribosomal subunit (LSU). Mature yeast ribosomes consist of a small (40S) and a large (60S) subunit. The 40S small subunit contains 1 molecule of ribosomal RNA (18S rRNA) and at least 33 different proteins. The large 60S subunit contains 3 rRNA molecules (25S, 5.8S and 5S rRNA) and at least 46 different proteins.

The protein resides in the cytoplasm. It localises to the nucleus. It is found in the nucleolus. In terms of biological role, component of the ribosome, a large ribonucleoprotein complex responsible for the synthesis of proteins in the cell. The small ribosomal subunit (SSU) binds messenger RNAs (mRNAs) and translates the encoded message by selecting cognate aminoacyl-transfer RNA (tRNA) molecules. The large subunit (LSU) contains the ribosomal catalytic site termed the peptidyl transferase center (PTC), which catalyzes the formation of peptide bonds, thereby polymerizing the amino acids delivered by tRNAs into a polypeptide chain. The nascent polypeptides leave the ribosome through a tunnel in the LSU and interact with protein factors that function in enzymatic processing, targeting, and the membrane insertion of nascent chains at the exit of the ribosomal tunnel. In Schizosaccharomyces pombe (strain 972 / ATCC 24843) (Fission yeast), this protein is Large ribosomal subunit protein eL33A (rpl35b).